Here is a 131-residue protein sequence, read N- to C-terminus: UPF0134 protein MPN_010 (131 aa).

The protein belongs to the UPF0134 family.

This is UPF0134 protein MPN_010 from Mycoplasma pneumoniae (strain ATCC 29342 / M129 / Subtype 1) (Mycoplasmoides pneumoniae).